The chain runs to 647 residues: 1-deoxy-D-xylulose-5-phosphate synthase (647 aa).

Residues His88 and 129–131 each bind thiamine diphosphate; that span reads GHA. Asp160 is a Mg(2+) binding site. Residues 161 to 162, Asn189, Tyr300, and Glu377 contribute to the thiamine diphosphate site; that span reads GA. Asn189 is a binding site for Mg(2+).

Belongs to the transketolase family. DXPS subfamily. In terms of assembly, homodimer. Mg(2+) serves as cofactor. Requires thiamine diphosphate as cofactor.

The enzyme catalyses D-glyceraldehyde 3-phosphate + pyruvate + H(+) = 1-deoxy-D-xylulose 5-phosphate + CO2. The protein operates within metabolic intermediate biosynthesis; 1-deoxy-D-xylulose 5-phosphate biosynthesis; 1-deoxy-D-xylulose 5-phosphate from D-glyceraldehyde 3-phosphate and pyruvate: step 1/1. Functionally, catalyzes the acyloin condensation reaction between C atoms 2 and 3 of pyruvate and glyceraldehyde 3-phosphate to yield 1-deoxy-D-xylulose-5-phosphate (DXP). The polypeptide is 1-deoxy-D-xylulose-5-phosphate synthase (Dehalococcoides mccartyi (strain ATCC BAA-2266 / KCTC 15142 / 195) (Dehalococcoides ethenogenes (strain 195))).